Here is a 255-residue protein sequence, read N- to C-terminus: Thiazole synthase (255 aa).

Residue Lys95 is the Schiff-base intermediate with DXP of the active site. 1-deoxy-D-xylulose 5-phosphate is bound by residues Gly156, 182–183, and 204–205; these read AG and NT.

It belongs to the ThiG family. In terms of assembly, homotetramer. Forms heterodimers with either ThiH or ThiS.

The protein resides in the cytoplasm. The enzyme catalyses [ThiS sulfur-carrier protein]-C-terminal-Gly-aminoethanethioate + 2-iminoacetate + 1-deoxy-D-xylulose 5-phosphate = [ThiS sulfur-carrier protein]-C-terminal Gly-Gly + 2-[(2R,5Z)-2-carboxy-4-methylthiazol-5(2H)-ylidene]ethyl phosphate + 2 H2O + H(+). It participates in cofactor biosynthesis; thiamine diphosphate biosynthesis. Functionally, catalyzes the rearrangement of 1-deoxy-D-xylulose 5-phosphate (DXP) to produce the thiazole phosphate moiety of thiamine. Sulfur is provided by the thiocarboxylate moiety of the carrier protein ThiS. In vitro, sulfur can be provided by H(2)S. The polypeptide is Thiazole synthase (Vibrio parahaemolyticus serotype O3:K6 (strain RIMD 2210633)).